The chain runs to 77 residues: U8-lycotoxin-Ls1e (77 aa).

The first 20 residues, 1–20, serve as a signal peptide directing secretion; it reads MKLIIFTGLVLFAIVSLIEA. The propeptide occupies 21-26; it reads QAENEK.

This sequence belongs to the neurotoxin 19 (CSTX) family. 08 (U8-Lctx) subfamily. In terms of processing, contains 4 disulfide bonds. In terms of tissue distribution, expressed by the venom gland.

The protein localises to the secreted. The polypeptide is U8-lycotoxin-Ls1e (Lycosa singoriensis (Wolf spider)).